We begin with the raw amino-acid sequence, 185 residues long: Large ribosomal subunit protein bL17 (185 aa).

The protein belongs to the bacterial ribosomal protein bL17 family. Part of the 50S ribosomal subunit. Contacts protein L32.

The chain is Large ribosomal subunit protein bL17 from Rhodococcus erythropolis (strain PR4 / NBRC 100887).